The chain runs to 444 residues: MKSQSKRTSRLFVFVGVVVAIIIAVLSWRYFGTGSDNNTSGAQQSARGQDTSHGGRRNTPLAPVQAATATEQEVPRYLTGLGTVIAANTVTVTSRVDGELMALHFTEGQQVKAGDLLAEIDPRPYEVQLTQAQGQLAKDQATLDNARRDLARYQKLSKTGLISQQELDTQSSLVRQSEGSVKADQGAIDSAKLQLTYSRITAPISGRVGLKQVDVGNYITSGTATPIVVITQTHPVDVVFTLPESDIPAIMQAQKNAEKTHAIVPVEAWDRTNKQMLAQGYLLSIDNQIDTTTGTIKLKARFNNEDDVLFPNQFVNARIKVDLLQNAVVVPTAAVQMGSEGNFVWTLDDANRVSKHLVTTGIQDSQQVVIDAGLNAGQRVVTDGIDRLTEGVQVEVVTPRSANTDTNPASAEKAAAEAEGSTPHQGRGRPANAPARSTTAAEKS.

The N-terminal stretch at M1 to A20 is a signal peptide. Residues N37 to S52 are compositionally biased toward polar residues. Disordered stretches follow at residues N37 to P60 and P399 to S444. The segment covering A409 to E419 has biased composition (low complexity). A compositionally biased stretch (polar residues) spans A435 to S444.

This sequence belongs to the membrane fusion protein (MFP) (TC 8.A.1) family. As to quaternary structure, part of a tripartite efflux system composed of MdtA, MdtB and MdtC.

Its subcellular location is the cell inner membrane. The sequence is that of Multidrug resistance protein MdtA from Yersinia pseudotuberculosis serotype I (strain IP32953).